A 402-amino-acid polypeptide reads, in one-letter code: Heat stress transcription factor A-6a (402 aa).

The segment at 1 to 28 (MLKPQTPRARRAAHPNSHMASSSSSSSL) is disordered. Residues 212 to 258 (EVVSLKRDRAALRAEVIMLKQQYNACKSQLIAMEEMVRNIERRQQQT) adopt a coiled-coil conformation. The tract at residues 216–266 (LKRDRAALRAEVIMLKQQYNACKSQLIAMEEMVRNIERRQQQTIGFFAKVL) is hydrophobic repeat HR-A/B. The Nuclear localization signal motif lies at 290-293 (KRQR). The AHA motif lies at 349–358 (DDVWEELDAL).

It belongs to the HSF family. Class A subfamily. As to quaternary structure, homotrimer. In terms of processing, exhibits temperature-dependent phosphorylation.

It is found in the nucleus. Functionally, transcriptional regulator that specifically binds DNA of heat shock promoter elements (HSE). The chain is Heat stress transcription factor A-6a (HSFA6B) from Oryza sativa subsp. japonica (Rice).